Consider the following 645-residue polypeptide: Glucans biosynthesis glucosyltransferase H (645 aa).

The segment at 1–28 (MDGTVTLSPAPTDLPPVSSLDAGQPTLP) is disordered. The next 7 helical transmembrane spans lie at 64–84 (LIGG…SVLW), 98–118 (LFVL…AGFI), 423–443 (APMW…GAGI), 465–485 (AIWI…LGYI), 504–524 (ALSI…VMYL), 558–578 (SYGG…LVSP), and 580–600 (LAAW…VVAV).

It belongs to the glycosyltransferase 2 family. OpgH subfamily.

The protein localises to the cell inner membrane. Its pathway is glycan metabolism; osmoregulated periplasmic glucan (OPG) biosynthesis. In terms of biological role, involved in the biosynthesis of osmoregulated periplasmic glucans (OPGs). This Xanthomonas campestris pv. campestris (strain B100) protein is Glucans biosynthesis glucosyltransferase H.